Here is a 283-residue protein sequence, read N- to C-terminus: Elongation factor Ts (283 aa).

Residues 80–83 form an involved in Mg(2+) ion dislocation from EF-Tu region; it reads TDFV.

It belongs to the EF-Ts family.

The protein resides in the cytoplasm. Its function is as follows. Associates with the EF-Tu.GDP complex and induces the exchange of GDP to GTP. It remains bound to the aminoacyl-tRNA.EF-Tu.GTP complex up to the GTP hydrolysis stage on the ribosome. The polypeptide is Elongation factor Ts (Actinobacillus pleuropneumoniae serotype 5b (strain L20)).